Here is a 100-residue protein sequence, read N- to C-terminus: MIPLQHGLILAAILFVLGLTGLVIRRNLLFMLIGLEIMINAAALAFVVAGSYWGQTDGQIMYILAISLAAAEASIGLALLLQLHRRRQNLNIDSVSEMRG.

3 helical membrane passes run 4–24 (LQHGLILAAILFVLGLTGLVI), 28–48 (LLFMLIGLEIMINAAALAFVV), and 60–80 (IMYILAISLAAAEASIGLALL).

Belongs to the complex I subunit 4L family. NDH-1 is composed of 13 different subunits. Subunits NuoA, H, J, K, L, M, N constitute the membrane sector of the complex.

Its subcellular location is the cell inner membrane. The enzyme catalyses a quinone + NADH + 5 H(+)(in) = a quinol + NAD(+) + 4 H(+)(out). Its function is as follows. NDH-1 shuttles electrons from NADH, via FMN and iron-sulfur (Fe-S) centers, to quinones in the respiratory chain. The immediate electron acceptor for the enzyme in this species is believed to be ubiquinone. Couples the redox reaction to proton translocation (for every two electrons transferred, four hydrogen ions are translocated across the cytoplasmic membrane), and thus conserves the redox energy in a proton gradient. The chain is NADH-quinone oxidoreductase subunit K from Cronobacter sakazakii (strain ATCC BAA-894) (Enterobacter sakazakii).